The primary structure comprises 332 residues: MTKITVFGMGSFGTALANVLAENGHDVLMWGKNQDAVDELNTCHTNKKYLKYAKLDVNIIATSDMTKAIQFADIYLMALPTKAMREVATQINDKLTSKKTFIHVAKGIENGTFKRVSEMIEDSISPEYNAGIGVLSGPSHAEEVVVKQPTTVAASSKDKNVSKLTQDLFMNDYLRVYTNDDLIGVELGGALKNIIAVASGIVAGIGYGDNAKAALMTRGLAEISRLGEKLGADPMTFLGLGGIGDLIVTCTSTHSRNFTLGYKLGQGESMDQALSEMNMVVEGIYTTKSVYHLAKEKNVDMPITNALYRVLFENISVKECVKDLMERDKKSE.

4 residues coordinate NADPH: serine 11, phenylalanine 12, lysine 32, and lysine 106. Sn-glycerol 3-phosphate contacts are provided by lysine 106, glycine 137, and serine 139. Alanine 141 contacts NADPH. Residues lysine 192, aspartate 245, serine 255, arginine 256, and asparagine 257 each coordinate sn-glycerol 3-phosphate. The Proton acceptor role is filled by lysine 192. Arginine 256 lines the NADPH pocket. NADPH-binding residues include valine 280 and glutamate 282.

This sequence belongs to the NAD-dependent glycerol-3-phosphate dehydrogenase family.

It is found in the cytoplasm. The catalysed reaction is sn-glycerol 3-phosphate + NAD(+) = dihydroxyacetone phosphate + NADH + H(+). It carries out the reaction sn-glycerol 3-phosphate + NADP(+) = dihydroxyacetone phosphate + NADPH + H(+). It functions in the pathway membrane lipid metabolism; glycerophospholipid metabolism. Catalyzes the reduction of the glycolytic intermediate dihydroxyacetone phosphate (DHAP) to sn-glycerol 3-phosphate (G3P), the key precursor for phospholipid synthesis. The sequence is that of Glycerol-3-phosphate dehydrogenase [NAD(P)+] from Staphylococcus aureus (strain bovine RF122 / ET3-1).